A 406-amino-acid polypeptide reads, in one-letter code: Phosphorylase b kinase gamma catalytic chain, liver/testis isoform (406 aa).

Residues 24–291 (YDPKDVIGRG…AEQALQHPFF (268 aa)) enclose the Protein kinase domain. Residues 30-38 (IGRGVSSVV) and lysine 53 contribute to the ATP site. The active-site Proton acceptor is aspartate 153. The interval 306–330 (QRFRVAVWTVLAAGRVALSTHRVRP) is calmodulin-binding (domain-N). Residue serine 345 is modified to Phosphoserine. Residues 346-370 (VRHLIDNCAFRLYGHWVKKGEQQNR) form a calmodulin-binding (domain-C) region.

The protein belongs to the protein kinase superfamily. CAMK Ser/Thr protein kinase family. In terms of assembly, hexadecamer of 4 heterotetramers, each composed of alpha, beta, gamma, and delta subunits. Alpha (PHKA1 or PHKA2) and beta (PHKB) are regulatory subunits, gamma (PHKG1 or PHKG2) is the catalytic subunit, and delta is calmodulin.

The enzyme catalyses 2 ATP + phosphorylase b = 2 ADP + phosphorylase a.. Functionally, catalytic subunit of the phosphorylase b kinase (PHK), which mediates the neural and hormonal regulation of glycogen breakdown (glycogenolysis) by phosphorylating and thereby activating glycogen phosphorylase. May regulate glycogeneolysis in the testis. In vitro, phosphorylates PYGM. The polypeptide is Phosphorylase b kinase gamma catalytic chain, liver/testis isoform (PHKG2) (Homo sapiens (Human)).